The following is a 394-amino-acid chain: Na(+)/H(+) antiporter NhaA (394 aa).

A run of 11 helical transmembrane segments spans residues 17–37, 59–79, 95–115, 124–144, 154–174, 177–197, 213–233, 261–281, 287–307, 328–348, and 363–383; these read ILLM…LAGV, LLLW…GLEV, SLPS…YLAF, VGWA…MALL, VFLL…IALF, TDLS…MVAL, FILW…GVII, FMIL…NMTL, PITL…VLLF, IIPV…IASL, and LGIL…LAKV.

Belongs to the NhaA Na(+)/H(+) (TC 2.A.33) antiporter family.

It is found in the cell inner membrane. The enzyme catalyses Na(+)(in) + 2 H(+)(out) = Na(+)(out) + 2 H(+)(in). In terms of biological role, na(+)/H(+) antiporter that extrudes sodium in exchange for external protons. This Shewanella frigidimarina (strain NCIMB 400) protein is Na(+)/H(+) antiporter NhaA.